Here is a 96-residue protein sequence, read N- to C-terminus: Co-chaperonin GroES (96 aa).

Belongs to the GroES chaperonin family. As to quaternary structure, heptamer of 7 subunits arranged in a ring. Interacts with the chaperonin GroEL.

The protein localises to the cytoplasm. In terms of biological role, together with the chaperonin GroEL, plays an essential role in assisting protein folding. The GroEL-GroES system forms a nano-cage that allows encapsulation of the non-native substrate proteins and provides a physical environment optimized to promote and accelerate protein folding. GroES binds to the apical surface of the GroEL ring, thereby capping the opening of the GroEL channel. In Actinobacillus pleuropneumoniae serotype 7 (strain AP76), this protein is Co-chaperonin GroES.